We begin with the raw amino-acid sequence, 1352 residues long: Astrotactin-2 (1352 aa).

Residues 1-31 (MAAAGARRSPGRGLGLRGRPRLGFHPGPPPP) form a disordered region. Residues 1-51 (MAAAGARRSPGRGLGLRGRPRLGFHPGPPPPPPPPLLLLFLLLLPPPPLLA) form the signal peptide. Topologically, residues 52–218 (GATAAAASRE…IVEEQMHILH (167 aa)) are lumenal. N-linked (GlcNAc...) asparagine glycosylation is present at Asn180. A helical membrane pass occupies residues 219–239 (ISVMGGLIALLLLLLVFTVAL). Over 240–447 (YAQRRWQKRR…KGLLKSPVNK (208 aa)) the chain is Cytoplasmic. Disordered stretches follow at residues 308–327 (EEEE…DEFG) and 375–421 (TPVE…ADDE). A compositionally biased stretch (polar residues) spans 383 to 392 (QPASRSSTSA). Residues 448–468 (TALTLIAVSSCILAMVCGNQM) form a helical membrane-spanning segment. Topologically, residues 469 to 1352 (SCPLTVKVTL…RNTYGETKGR (884 aa)) are lumenal. EGF-like domains follow at residues 523–563 (VRDL…HLCV), 664–708 (PVRD…SGCY), and 712–764 (KGID…KSCL). 9 disulfide bridges follow: Cys527/Cys539, Cys535/Cys546, Cys548/Cys562, Cys668/Cys681, Cys675/Cys692, Cys694/Cys707, Cys716/Cys728, Cys724/Cys748, and Cys750/Cys763. An N-linked (GlcNAc...) asparagine glycan is attached at Asn796. Intrachain disulfides connect Cys838–Cys1000, Cys929–Cys990, and Cys996–Cys1003. N-linked (GlcNAc...) asparagine glycosylation is present at Asn1033. Cystine bridges form between Cys1049-Cys1060, Cys1062-Cys1075, Cys1149-Cys1171, Cys1203-Cys1290, and Cys1311-Cys1334. The Fibronectin type-III domain occupies 1079–1201 (PQPVLRLSPT…SELSTVTLRT (123 aa)).

It belongs to the astrotactin family. In terms of assembly, interacts with ASTN1; the interaction is not calcium-dependent. Detected in cerebellum granule neurons; not detected in astroglia (at protein level). Detected primarily in cerebellum, and at lower levels in brain cortex, olfactory bulb, hindbrain and hippocampus dentate gyrus. Between 6 and 10 days after birth, when granule cell migration occurs in the cerebellum, detected in granule cell precursors in the external germinal layer, the molecular layer, the internal granule layer and in Purkinje neurons. Detected in postmitotic neurons in adult cerebellum.

The protein localises to the membrane. The protein resides in the perikaryon. Its subcellular location is the cytoplasm. It is found in the cell cortex. It localises to the early endosome. The protein localises to the late endosome. The protein resides in the cytoplasmic vesicle. Its subcellular location is the clathrin-coated vesicle. Its function is as follows. Mediates recycling of the neuronal cell adhesion molecule ASTN1 to the anterior pole of the cell membrane in migrating neurons. Promotes ASTN1 internalization and intracellular transport of endocytosed ASTN1. Selectively binds inositol-4,5-bisphosphate, inositol-3,4,5-trisphosphate and inositol-1,3,4,5-tetrakisphosphate, suggesting it is recruited to membranes that contain lipids with a phosphoinositide headgroup. The chain is Astrotactin-2 (Astn2) from Mus musculus (Mouse).